We begin with the raw amino-acid sequence, 287 residues long: MKKKNHKYRGKKLNRGESPNFSGQHLMHNKKLIEEIVDRANISIDDTVLELGAGKGALTTVLSQKAGKVLAVENDSKFVDILTRKTAQHSNTKIIHQDIMKIHLPKEKFVVVSNIPYAITTPIMKMLLNNPASGFQKGIIVMEKGAAKRFTSKFIKNSYVLAWRMWFDIGIVREISKEHFSPPPKVDSAMVRITRKKDAPLSHKHYIAFRGLAEYALKEPNIPLCVRLRGIFTPRQMKHLRKSLKINNEKTVGTLTENQWAVIFNTMTQYVMHHKWPRANKRKPGEI.

Basic residues predominate over residues 1 to 13 (MKKKNHKYRGKKL). A disordered region spans residues 1-21 (MKKKNHKYRGKKLNRGESPNF). S-adenosyl-L-methionine is bound by residues histidine 25, methionine 27, glycine 52, glutamate 73, aspartate 98, and asparagine 114.

It belongs to the class I-like SAM-binding methyltransferase superfamily. rRNA adenine N(6)-methyltransferase family. Homodimer.

Its function is as follows. Involved in erythromycin resistance. This Bacillus anthracis protein is rRNA adenine N-6-methyltransferase (ermJ).